We begin with the raw amino-acid sequence, 107 residues long: Rhodocoxin (107 aa).

Residues 2–106 (PTVTYVHPDG…GLIVRLPEEQ (105 aa)) enclose the 2Fe-2S ferredoxin-type domain. The [2Fe-2S] cluster site is built by C40, C46, C49, and C87.

This sequence belongs to the adrenodoxin/putidaredoxin family. It depends on [2Fe-2S] cluster as a cofactor.

Its function is as follows. Ferredoxin-type protein which transfers electrons from rhodocoxin reductase to cytochrome CYP116 (ThcB), which is involved in the degradation of thiocarbamate herbicides. The sequence is that of Rhodocoxin (thcC) from Rhodococcus erythropolis (Arthrobacter picolinophilus).